The sequence spans 29 residues: Lambda-theraphotoxin-Ec2b (29 aa).

3 disulfides stabilise this stretch: Cys-2/Cys-16, Cys-9/Cys-21, and Cys-15/Cys-25.

This sequence belongs to the neurotoxin 30 (phrixotoxin) family. In terms of tissue distribution, expressed by the venom gland.

Its subcellular location is the secreted. Insect-selective neurotoxin that potently blocks insect calcium-activated potassium (BKCa) channels (Slo-type) in cockroach dorsal unpaired median (DUM) neurons (IC(50)=25.3 nM). This occurs in the absence of any shifts in the voltage dependence of activation. May interact with the turret and/or loop region of the external entrance to the channel and does not project deeply into the pore of the channel. In vivo, does not show toxicity in mice after intracerebroventricular injection of up to 25 pmol/g (1.8 ug/20 g mouse). The protein is Lambda-theraphotoxin-Ec2b of Eucratoscelus constrictus (African red-rump baboon spider).